Reading from the N-terminus, the 248-residue chain is Mannose-binding protein C (248 aa).

Residues 1-20 (MSLFPSLTLLLLSVVATSYS) form the signal peptide. The Collagen-like domain occupies 42–99 (GINGFPGKDGRDGTKGEKGEPGQGLRGLQGPPGKLGPPGNPGSSGSPGPKGQKGDPGE). The disordered stretch occupies residues 43 to 111 (INGFPGKDGR…DCESSLAASE (69 aa)). Pro-47 carries the 4-hydroxyproline modification. Residues 49-61 (KDGRDGTKGEKGE) are compositionally biased toward basic and acidic residues. Pro-73, Pro-79, Pro-82, and Pro-88 each carry 4-hydroxyproline. The segment covering 82–91 (PGSSGSPGPK) has biased composition (low complexity). A coiled-coil region spans residues 112–130 (RKALQTEMARIKKWLTFSL). Residues 134–245 (VGNKFFLTNG…CSSSHLALCE (112 aa)) form the C-type lectin domain. Intrachain disulfides connect Cys-155-Cys-244 and Cys-222-Cys-236.

In terms of assembly, oligomeric complex of 3 or more homotrimers. Interacts with MASP1 and MASP2. Interacts with MEP1A and MEP1B and may inhibit their catalytic activity. Hydroxylation on proline residues within the sequence motif, GXPG, is most likely to be 4-hydroxy as this fits the requirement for 4-hydroxylation in vertebrates.

Its subcellular location is the secreted. Functionally, calcium-dependent lectin involved in innate immune defense. Binds mannose, fucose and N-acetylglucosamine on different microorganisms and activates the lectin complement pathway. Binds to late apoptotic cells, as well as to apoptotic blebs and to necrotic cells, but not to early apoptotic cells, facilitating their uptake by macrophages. The sequence is that of Mannose-binding protein C (MBL2) from Macaca fascicularis (Crab-eating macaque).